Reading from the N-terminus, the 463-residue chain is L-seryl-tRNA(Sec) selenium transferase (463 aa).

Position 295 is an N6-(pyridoxal phosphate)lysine (K295).

It belongs to the SelA family. As to quaternary structure, homodecamer; pentamer of dimers. Binds only one seryl-tRNA(Sec) per dimer. The cofactor is pyridoxal 5'-phosphate.

The protein localises to the cytoplasm. The catalysed reaction is L-seryl-tRNA(Sec) + selenophosphate + H(+) = L-selenocysteinyl-tRNA(Sec) + phosphate. It functions in the pathway aminoacyl-tRNA biosynthesis; selenocysteinyl-tRNA(Sec) biosynthesis; selenocysteinyl-tRNA(Sec) from L-seryl-tRNA(Sec) (bacterial route): step 1/1. In terms of biological role, converts seryl-tRNA(Sec) to selenocysteinyl-tRNA(Sec) required for selenoprotein biosynthesis. This chain is L-seryl-tRNA(Sec) selenium transferase, found in Salmonella dublin (strain CT_02021853).